A 179-amino-acid chain; its full sequence is Large ribosomal subunit protein uL5 (179 aa).

This sequence belongs to the universal ribosomal protein uL5 family. Part of the 50S ribosomal subunit; part of the 5S rRNA/L5/L18/L25 subcomplex. Contacts the 5S rRNA and the P site tRNA. Forms a bridge to the 30S subunit in the 70S ribosome.

In terms of biological role, this is one of the proteins that bind and probably mediate the attachment of the 5S RNA into the large ribosomal subunit, where it forms part of the central protuberance. In the 70S ribosome it contacts protein S13 of the 30S subunit (bridge B1b), connecting the 2 subunits; this bridge is implicated in subunit movement. Contacts the P site tRNA; the 5S rRNA and some of its associated proteins might help stabilize positioning of ribosome-bound tRNAs. The polypeptide is Large ribosomal subunit protein uL5 (Nitratidesulfovibrio vulgaris (strain DSM 19637 / Miyazaki F) (Desulfovibrio vulgaris)).